Reading from the N-terminus, the 199-residue chain is dCTP deaminase, dUMP-forming (199 aa).

DCTP-binding positions include 101-106, aspartate 119, 127-129, glutamine 148, tyrosine 162, and glutamine 174; these read KSSLGR and TLE. The active-site Proton donor/acceptor is glutamate 129. The disordered stretch occupies residues 163 to 199; sequence GSAAAGSKYQGQRGPTPSRSYLNFPLPSDAVDAVESR. Polar residues predominate over residues 171–183; sequence YQGQRGPTPSRSY.

Belongs to the dCTP deaminase family. As to quaternary structure, homotrimer.

It carries out the reaction dCTP + 2 H2O = dUMP + NH4(+) + diphosphate. Its pathway is pyrimidine metabolism; dUMP biosynthesis; dUMP from dCTP: step 1/1. Functionally, bifunctional enzyme that catalyzes both the deamination of dCTP to dUTP and the hydrolysis of dUTP to dUMP without releasing the toxic dUTP intermediate. The sequence is that of dCTP deaminase, dUMP-forming from Nocardia farcinica (strain IFM 10152).